The chain runs to 318 residues: tRNA-cytidine(32) 2-sulfurtransferase (318 aa).

Positions 52–57 (SGGKDS) match the PP-loop motif motif. [4Fe-4S] cluster-binding residues include Cys127, Cys130, and Cys218.

Belongs to the TtcA family. Homodimer. Mg(2+) is required as a cofactor. Requires [4Fe-4S] cluster as cofactor.

The protein resides in the cytoplasm. The catalysed reaction is cytidine(32) in tRNA + S-sulfanyl-L-cysteinyl-[cysteine desulfurase] + AH2 + ATP = 2-thiocytidine(32) in tRNA + L-cysteinyl-[cysteine desulfurase] + A + AMP + diphosphate + H(+). The protein operates within tRNA modification. In terms of biological role, catalyzes the ATP-dependent 2-thiolation of cytidine in position 32 of tRNA, to form 2-thiocytidine (s(2)C32). The sulfur atoms are provided by the cysteine/cysteine desulfurase (IscS) system. This is tRNA-cytidine(32) 2-sulfurtransferase from Actinobacillus pleuropneumoniae serotype 5b (strain L20).